Here is a 150-residue protein sequence, read N- to C-terminus: UPF0178 protein PputGB1_5282 (150 aa).

This sequence belongs to the UPF0178 family.

The protein is UPF0178 protein PputGB1_5282 of Pseudomonas putida (strain GB-1).